The sequence spans 112 residues: MERLSEQTCEICRVGAPLATAEEIAGFRSQIPDWQILTIDGVQRLSRTYRFRNFAEALEFTNRVGALAETEGHHPAIVTAWGEVTVQWWTHKIKGLHRNDLIMAAKTDALLE.

The protein belongs to the pterin-4-alpha-carbinolamine dehydratase family.

The enzyme catalyses (4aS,6R)-4a-hydroxy-L-erythro-5,6,7,8-tetrahydrobiopterin = (6R)-L-erythro-6,7-dihydrobiopterin + H2O. The sequence is that of Putative pterin-4-alpha-carbinolamine dehydratase from Syntrophotalea carbinolica (strain DSM 2380 / NBRC 103641 / GraBd1) (Pelobacter carbinolicus).